Reading from the N-terminus, the 241-residue chain is Probable transcriptional regulatory protein PSHAb0060 (241 aa).

It belongs to the TACO1 family.

It is found in the cytoplasm. The protein is Probable transcriptional regulatory protein PSHAb0060 of Pseudoalteromonas translucida (strain TAC 125).